The sequence spans 1366 residues: Protein strawberry notch homolog 2 (1366 aa).

Disordered stretches follow at residues 1-24 (MLAVGPAMDRDYPQHEPPPAGSLL), 174-217 (QEQS…KQHP), 614-640 (STKRKRDRGAGSKRKRRPRGRGAKAPR), and 1324-1366 (HAGP…QAPL). Positions 15-24 (HEPPPAGSLL) are enriched in pro residues. Over residues 182-194 (PEEEDEAEEEEAE) the composition is skewed to acidic residues. Residues 614–637 (STKRKRDRGAGSKRKRRPRGRGAK) show a composition bias toward basic residues. Over residues 1333–1347 (LGEGAGAGGAAGGGP) the composition is skewed to gly residues.

The protein belongs to the SBNO family. As to quaternary structure, interacts with TAL1; this interaction inhibits TAL1 occupancy of the DCSTAMP promoter, leading to the activation of the DCSTAMP promoter by the transcription factor MITF. Detected in macrophages. IL10 regulates expression in a STAT3-dependent way.

In terms of biological role, acts as a transcriptional coregulator, that can have both coactivator and corepressor functions. Inhibits the DCSTAMP-repressive activity of TAL1, hence enhancing the access of the transcription factor MITF to the DC-STAMP promoter in osteoclast. Plays a role in bone homeostasis; required as a positive regulator in TNFSF11//RANKL-mediated osteoclast fusion via a DCSTAMP-dependent pathway. May also be required in the regulation of osteoblast differentiation. Involved in the transcriptional corepression of NF-kappaB in macrophages. Plays a role as a regulator in the pro-inflammatory cascade. This is Protein strawberry notch homolog 2 (SBNO2) from Homo sapiens (Human).